Here is a 212-residue protein sequence, read N- to C-terminus: NAD(P)H-hydrate epimerase (212 aa).

A YjeF N-terminal domain is found at 11–212; sequence MRHYDSYTIN…ANDMGTYAVD (202 aa). 60–64 is a binding site for (6S)-NADPHX; the sequence is NNGGD. Residues N61 and D123 each contribute to the K(+) site. (6S)-NADPHX is bound by residues 127–133, Y138, and D156; that span reads GIGIDRA. S159 serves as a coordination point for K(+).

It belongs to the NnrE/AIBP family. K(+) is required as a cofactor.

The enzyme catalyses (6R)-NADHX = (6S)-NADHX. It carries out the reaction (6R)-NADPHX = (6S)-NADPHX. Catalyzes the epimerization of the S- and R-forms of NAD(P)HX, a damaged form of NAD(P)H that is a result of enzymatic or heat-dependent hydration. This is a prerequisite for the S-specific NAD(P)H-hydrate dehydratase to allow the repair of both epimers of NAD(P)HX. This chain is NAD(P)H-hydrate epimerase, found in Limosilactobacillus reuteri (strain ATCC 55730 / SD2112) (Lactobacillus reuteri).